The sequence spans 84 residues: DNA-directed RNA polymerase subunit Rpo5 (84 aa).

This sequence belongs to the archaeal Rpo5/eukaryotic RPB5 RNA polymerase subunit family. In terms of assembly, part of the 13-subunit RNA polymerase.

It is found in the cytoplasm. The enzyme catalyses RNA(n) + a ribonucleoside 5'-triphosphate = RNA(n+1) + diphosphate. In terms of biological role, DNA-dependent RNA polymerase (RNAP) catalyzes the transcription of DNA into RNA using the four ribonucleoside triphosphates as substrates. Functionally, reconstitution experiments show this subunit is required for basic activity. In Sulfolobus acidocaldarius (strain ATCC 33909 / DSM 639 / JCM 8929 / NBRC 15157 / NCIMB 11770), this protein is DNA-directed RNA polymerase subunit Rpo5.